A 163-amino-acid polypeptide reads, in one-letter code: Putative pre-16S rRNA nuclease (163 aa).

The protein belongs to the YqgF nuclease family.

It localises to the cytoplasm. Its function is as follows. Could be a nuclease involved in processing of the 5'-end of pre-16S rRNA. This Nitrobacter winogradskyi (strain ATCC 25391 / DSM 10237 / CIP 104748 / NCIMB 11846 / Nb-255) protein is Putative pre-16S rRNA nuclease.